We begin with the raw amino-acid sequence, 97 residues long: MLTIYGISRTKCGKKASRRLRLQNKFPAIIHVSLISNISIELSQNDFINIEMKNSDFYKSEVILIVDKVKYIVKIQEIQRHAFKSKILHIDFLKVSV.

This sequence belongs to the bacterial ribosomal protein bL25 family. As to quaternary structure, part of the 50S ribosomal subunit; part of the 5S rRNA/L5/L18/L25 subcomplex. Contacts the 5S rRNA. Binds to the 5S rRNA independently of L5 and L18.

In terms of biological role, this is one of the proteins that binds to the 5S RNA in the ribosome where it forms part of the central protuberance. This chain is Large ribosomal subunit protein bL25, found in Buchnera aphidicola subsp. Baizongia pistaciae (strain Bp).